The following is a 131-amino-acid chain: Phosphoribosyl-ATP pyrophosphatase 2 (131 aa).

Residues 105–131 (RIGKPAAPHATRRPVIPQEARAVRKHR) are disordered.

It belongs to the PRA-PH family.

It localises to the cytoplasm. It catalyses the reaction 1-(5-phospho-beta-D-ribosyl)-ATP + H2O = 1-(5-phospho-beta-D-ribosyl)-5'-AMP + diphosphate + H(+). It participates in amino-acid biosynthesis; L-histidine biosynthesis; L-histidine from 5-phospho-alpha-D-ribose 1-diphosphate: step 2/9. The sequence is that of Phosphoribosyl-ATP pyrophosphatase 2 (hisE2) from Rhodopseudomonas palustris (strain ATCC BAA-98 / CGA009).